The sequence spans 500 residues: Intracellular exo-alpha-(1-&gt;5)-L-arabinofuranosidase (500 aa).

3 residues coordinate alpha-L-arabinofuranose: glutamate 28, asparagine 73, and asparagine 173. The active-site Proton donor/acceptor is the glutamate 174. Residues tyrosine 245, glutamate 293, and glutamine 350 each coordinate alpha-L-arabinofuranose. Residue glutamate 293 is the Nucleophile of the active site.

The protein belongs to the glycosyl hydrolase 51 family. In terms of assembly, homohexamer; trimer of dimers.

It is found in the cytoplasm. The enzyme catalyses Hydrolysis of terminal non-reducing alpha-L-arabinofuranoside residues in alpha-L-arabinosides.. It functions in the pathway glycan metabolism; L-arabinan degradation. Involved in the degradation of arabinan and is a key enzyme in the complete degradation of the plant cell wall. Catalyzes the cleavage of terminal alpha-(1-&gt;5)-arabinofuranosyl bonds in different hemicellulosic homopolysaccharides (branched and debranched arabinans). This Halalkalibacterium halodurans (strain ATCC BAA-125 / DSM 18197 / FERM 7344 / JCM 9153 / C-125) (Bacillus halodurans) protein is Intracellular exo-alpha-(1-&gt;5)-L-arabinofuranosidase (abfA).